The chain runs to 201 residues: MQPFTSHTGLAVMIDSANIDTDQIIPKQFLSKVTRDGFGVHLFHDWRYLDDAGDVPNPDFTLNKPRYRGASILLAQENFGCGSSREHAPWALADFGLRAIIAPSFADIFYGNSINNGLLPVKLSANEVRQLMDEVASEEGAQITVDLTTCKVISPSGAEFSFTLAESARHKLLNGLDAIGLTLSHGTQIGEYEANIPSWRR.

It belongs to the LeuD family. LeuD type 1 subfamily. In terms of assembly, heterodimer of LeuC and LeuD.

The catalysed reaction is (2R,3S)-3-isopropylmalate = (2S)-2-isopropylmalate. It functions in the pathway amino-acid biosynthesis; L-leucine biosynthesis; L-leucine from 3-methyl-2-oxobutanoate: step 2/4. Catalyzes the isomerization between 2-isopropylmalate and 3-isopropylmalate, via the formation of 2-isopropylmaleate. The chain is 3-isopropylmalate dehydratase small subunit from Shewanella sp. (strain MR-7).